The chain runs to 642 residues: Frizzled-1 (642 aa).

Residues 1-68 (MAEEAAPSES…WLLEAPLLLG (68 aa)) form the signal peptide. Disordered stretches follow at residues 26 to 45 (PGRR…RPRA) and 76 to 99 (QVSG…QYNG). Residues 69 to 317 (VRAQAAGQVS…PEELRFSRTW (249 aa)) are Extracellular-facing. The 120-residue stretch at 106–225 (PDHGYCQPIS…HGAGELCVGQ (120 aa)) folds into the FZ domain. Disulfide bonds link C111-C172, C119-C165, C156-C193, C182-C222, and C186-C210. N125 carries an N-linked (GlcNAc...) asparagine glycan. N226 carries an N-linked (GlcNAc...) asparagine glycan. The chain crosses the membrane as a helical span at residues 318–338 (IGIWSVLCCASTLFTVLTYLV). Residues 339–349 (DMRRFSYPERP) are Cytoplasmic-facing. Residues 350 to 370 (IIFLSGCYTAVAVAYIAGFLL) form a helical membrane-spanning segment. Over 371–397 (EDRVVCNDKFAEDGARTVAQGTKKEGC) the chain is Extracellular. The helical transmembrane segment at 398 to 418 (TILFMMLYFFSMASSIWWVIL) threads the bilayer. At 419-440 (SLTWFLAAGMKWGHEAIEANSQ) the chain is on the cytoplasmic side. A helical membrane pass occupies residues 441–461 (YFHLAAWAVPAIKTITILALG). Over 462-484 (QVDGDVLSGVCFVGLNNVDALRG) the chain is Extracellular. The chain crosses the membrane as a helical span at residues 485–505 (FVLAPLFVYLFIGTSFLLAGF). Over 506–531 (VSLFRIRTIMKHDGTKTEKLEKLMVR) the chain is Cytoplasmic. The chain crosses the membrane as a helical span at residues 532–552 (IGVFSVLYTVPATIVIACYFY). Topologically, residues 553 to 593 (EQAFRDQWERSWVAQSCKSYAIPCPHLQGGGGVPPHPPMSP) are extracellular. Residues 594 to 614 (DFTVFMIKYLMTLIVGITSGF) traverse the membrane as a helical segment. Residues 615-642 (WIWSGKTLNSWRKFYTRLTNSKQGETTV) lie on the Cytoplasmic side of the membrane. The short motif at 620 to 625 (KTLNSW) is the Lys-Thr-X-X-X-Trp motif, mediates interaction with the PDZ domain of Dvl family members element. Positions 640 to 642 (TTV) match the PDZ-binding motif.

The protein belongs to the G-protein coupled receptor Fz/Smo family. In terms of assembly, interacts with MYOC. Interacts with WNT7B. In terms of processing, ubiquitinated by ZNRF3, leading to its degradation by the proteasome. As to expression, expressed in chondrocytes.

It localises to the cell membrane. In terms of biological role, receptor for Wnt proteins. Activated by WNT7B. Activated by WNT3A, WNT3, WNT1 and to a lesser extent WNT2, but apparently not by WNT4, WNT5A, WNT5B, WNT6, WNT7A or WNT7B. Contradictory results showing activation by WNT7B have been described for mouse. Functions in the canonical Wnt/beta-catenin signaling pathway. The canonical Wnt/beta-catenin signaling pathway leads to the activation of disheveled proteins, inhibition of GSK-3 kinase, nuclear accumulation of beta-catenin and activation of Wnt target genes. A second signaling pathway involving PKC and calcium fluxes has been seen for some family members, but it is not yet clear if it represents a distinct pathway or if it can be integrated in the canonical pathway, as PKC seems to be required for Wnt-mediated inactivation of GSK-3 kinase. Both pathways seem to involve interactions with G-proteins. May be involved in transduction and intercellular transmission of polarity information during tissue morphogenesis and/or in differentiated tissues. The polypeptide is Frizzled-1 (Fzd1) (Mus musculus (Mouse)).